The sequence spans 382 residues: MQNRPLTIGLVAGETSGDILGAGLIRALKAQIPDARFVGVAGPLMQAEGCETWYEMEELAVMGVVEVLERLPRLLKIRKDLTRRFSDLAPDVFVGIDAPDFNITLEGRLKQRGIRTIHYVSPSVWAWRQKRVFKIGKATDLVLAFLPFEKAFYDRFNVPCRFIGHTMADAMPLQPDKLAARAKLGIAADARCLALLPGSRGAEVEMLSADFLKTAQLLRTRYPELELVVPLVNAKRREQFERIKAEVAPELRVHLLNGQGREAMIASDAALLASGTAALECMLAKCPMVVGYRMKPFTFWIAQRLVKTPYVSLPNLLAGREIVTELLQHDCVPDKLAASVMPLLEDSPQTDELKQTFLTLHQSIRCGADEQAAQAVLELAKA.

The protein belongs to the LpxB family.

It carries out the reaction 2-N,3-O-bis[(3R)-3-hydroxytetradecanoyl]-alpha-D-glucosaminyl 1-phosphate + UDP-2-N,3-O-bis[(3R)-3-hydroxytetradecanoyl]-alpha-D-glucosamine = lipid A disaccharide (E. coli) + UDP + H(+). The enzyme catalyses a lipid X + a UDP-2-N,3-O-bis[(3R)-3-hydroxyacyl]-alpha-D-glucosamine = a lipid A disaccharide + UDP + H(+). It participates in glycolipid biosynthesis; lipid IV(A) biosynthesis; lipid IV(A) from (3R)-3-hydroxytetradecanoyl-[acyl-carrier-protein] and UDP-N-acetyl-alpha-D-glucosamine: step 5/6. Functionally, condensation of UDP-2,3-diacylglucosamine and 2,3-diacylglucosamine-1-phosphate to form lipid A disaccharide, a precursor of lipid A, a phosphorylated glycolipid that anchors the lipopolysaccharide to the outer membrane of the cell. The polypeptide is Lipid-A-disaccharide synthase (Serratia proteamaculans (strain 568)).